The following is a 950-amino-acid chain: uncharacterized protein (950 aa).

This is an uncharacterized protein from Rickettsia prowazekii (strain Madrid E).